Consider the following 129-residue polypeptide: Protein Turandot A1/2 (129 aa).

The signal sequence occupies residues 1–21; that stretch reads MNSSTALMCFALLLISPLCLG. An N-linked (GlcNAc...) asparagine glycan is attached at N49.

The protein belongs to the Turandot family.

The protein resides in the secreted. Functionally, a humoral factor that plays a role in stress tolerance; gives increased resistance to the lethal effects of bacterial challenge and stress. Regulated by the JAK/STAT pathway and NF-KB-like Relish pathway in the fat body, upd3 in the hemocytes and Mekk1 in response to septic injury and consequent immune response. The polypeptide is Protein Turandot A1/2 (TotA1) (Drosophila sechellia (Fruit fly)).